The following is a 592-amino-acid chain: Glutamine-rich protein 2 (592 aa).

The segment at 488-592 (QLQQAQHARP…TRGPRSTAAH (105 aa)) is disordered. Residues 544 to 567 (LQSNVSHSSIPTDIASLQGSQQGL) show a composition bias toward polar residues.

In terms of assembly, interacts with AKAP3, ODF2 and TSSK4. Interacts with AKAP4. In terms of tissue distribution, expressed in testis. Not detected in heart, brain, kidney, stomach, ovary, liver, lung and uterus.

The protein localises to the nucleus membrane. It localises to the nucleus. It is found in the cytoplasm. The protein resides in the cell projection. Its subcellular location is the cilium. The protein localises to the flagellum. Functionally, has an essential role in the formation of sperm flagella and flagellar structure maintainance. It acts as a suppressor of ubiquitination and degradation of proteins involved in flagellar development and motility. The polypeptide is Glutamine-rich protein 2 (Mus musculus (Mouse)).